The chain runs to 196 residues: ATP-dependent Clp protease proteolytic subunit (196 aa).

S101 acts as the Nucleophile in catalysis. H126 is an active-site residue.

This sequence belongs to the peptidase S14 family. Component of the chloroplastic Clp protease core complex.

Its subcellular location is the plastid. The protein resides in the chloroplast stroma. It catalyses the reaction Hydrolysis of proteins to small peptides in the presence of ATP and magnesium. alpha-casein is the usual test substrate. In the absence of ATP, only oligopeptides shorter than five residues are hydrolyzed (such as succinyl-Leu-Tyr-|-NHMec, and Leu-Tyr-Leu-|-Tyr-Trp, in which cleavage of the -Tyr-|-Leu- and -Tyr-|-Trp bonds also occurs).. Cleaves peptides in various proteins in a process that requires ATP hydrolysis. Has a chymotrypsin-like activity. Plays a major role in the degradation of misfolded proteins. The sequence is that of ATP-dependent Clp protease proteolytic subunit from Gossypium barbadense (Sea Island cotton).